Consider the following 118-residue polypeptide: NADPH-dependent 7-cyano-7-deazaguanine reductase (118 aa).

Residue Cys-31 is the Thioimide intermediate of the active site. Asp-38 (proton donor) is an active-site residue. Substrate-binding positions include 53–55 (IEL) and 72–73 (YE).

It belongs to the GTP cyclohydrolase I family. QueF type 1 subfamily.

The protein localises to the cytoplasm. It catalyses the reaction 7-aminomethyl-7-carbaguanine + 2 NADP(+) = 7-cyano-7-deazaguanine + 2 NADPH + 3 H(+). It participates in tRNA modification; tRNA-queuosine biosynthesis. In terms of biological role, catalyzes the NADPH-dependent reduction of 7-cyano-7-deazaguanine (preQ0) to 7-aminomethyl-7-deazaguanine (preQ1). This is NADPH-dependent 7-cyano-7-deazaguanine reductase from Prosthecochloris aestuarii (strain DSM 271 / SK 413).